Here is a 538-residue protein sequence, read N- to C-terminus: Histone-arginine methyltransferase CARMER (538 aa).

The SAM-dependent MTase PRMT-type domain occupies 148–457 (ASQYFQFYGY…QSYDVTIDLH (310 aa)). 6 residues coordinate S-adenosyl-L-methionine: Gln161, Arg170, Gly194, Glu216, Glu245, and Thr273. Asymmetric dimethylarginine; by autocatalysis is present on Arg508.

The protein belongs to the class I-like SAM-binding methyltransferase superfamily. Protein arginine N-methyltransferase family. In terms of assembly, homodimer. In terms of processing, the dimethylated protein is the major form.

The protein resides in the cytoplasm. Its subcellular location is the nucleus. It catalyses the reaction L-arginyl-[protein] + 2 S-adenosyl-L-methionine = N(omega),N(omega)-dimethyl-L-arginyl-[protein] + 2 S-adenosyl-L-homocysteine + 2 H(+). Its function is as follows. Methylates (mono- and asymmetric dimethylation) the guanidino nitrogens of arginyl residues in proteins. May methylate histone H3 at 'Arg-17' and activate transcription via chromatin remodeling. The chain is Histone-arginine methyltransferase CARMER (Art4) from Drosophila virilis (Fruit fly).